The following is a 257-amino-acid chain: MIILAGLGLYDEKDTTLKTVEFAKKADKIYAEFYTAILTGTTIEKIEETLGKEITILDREKVELETEKLINESKDKDIMFLTAGDPMVATTHIDIAIEAKKKGIEVIILNAPSIYSAIGITGLQLYKFGKTTSIVFPEPNYFPETPYDVIKENSKMGYHTLCLLDIQAHNTRFMTANEGLEVLLKIEEKRNENILNKDTKVVVVARAGSLKPKMVYGKIGDLLEYDFGAPLHCIIFTGNLHFMEEDALKYLCENISE.

S-adenosyl-L-methionine-binding positions include Leu9, Asp85, Val88, 113–114 (SI), Leu164, Ala207, and His232.

This sequence belongs to the diphthine synthase family. As to quaternary structure, homodimer.

It catalyses the reaction 2-[(3S)-amino-3-carboxypropyl]-L-histidyl-[translation elongation factor 2] + 3 S-adenosyl-L-methionine = diphthine-[translation elongation factor 2] + 3 S-adenosyl-L-homocysteine + 3 H(+). The protein operates within protein modification; peptidyl-diphthamide biosynthesis. Its function is as follows. S-adenosyl-L-methionine-dependent methyltransferase that catalyzes the trimethylation of the amino group of the modified target histidine residue in translation elongation factor 2 (EF-2), to form an intermediate called diphthine. The three successive methylation reactions represent the second step of diphthamide biosynthesis. This is Diphthine synthase from Methanococcus aeolicus (strain ATCC BAA-1280 / DSM 17508 / OCM 812 / Nankai-3).